The sequence spans 131 residues: Large ribosomal subunit protein bL17 (131 aa).

The protein belongs to the bacterial ribosomal protein bL17 family. Part of the 50S ribosomal subunit. Contacts protein L32.

The sequence is that of Large ribosomal subunit protein bL17 from Burkholderia ambifaria (strain MC40-6).